The sequence spans 874 residues: Protein translocase subunit SecA (874 aa).

Residues Gln87, 105 to 109, and Asp512 each bind ATP; that span reads GEGKT. Positions 859, 861, 870, and 871 each coordinate Zn(2+).

The protein belongs to the SecA family. In terms of assembly, monomer and homodimer. Part of the essential Sec protein translocation apparatus which comprises SecA, SecYEG and auxiliary proteins SecDF-YajC and YidC. Zn(2+) is required as a cofactor.

The protein resides in the cell inner membrane. The protein localises to the cytoplasm. The catalysed reaction is ATP + H2O + cellular proteinSide 1 = ADP + phosphate + cellular proteinSide 2.. Functionally, part of the Sec protein translocase complex. Interacts with the SecYEG preprotein conducting channel. Has a central role in coupling the hydrolysis of ATP to the transfer of proteins into and across the cell membrane, serving both as a receptor for the preprotein-SecB complex and as an ATP-driven molecular motor driving the stepwise translocation of polypeptide chains across the membrane. The polypeptide is Protein translocase subunit SecA (Buchnera aphidicola subsp. Schizaphis graminum (strain Sg)).